The chain runs to 85 residues: 4-hydroxyphenylacetate decarboxylase small subunit (85 aa).

Residues histidine 4, cysteine 7, cysteine 20, cysteine 34, cysteine 43, cysteine 46, cysteine 60, and cysteine 78 each coordinate [4Fe-4S] cluster.

Belongs to the HPA decarboxylase small subunit family. In terms of assembly, heterooctamer consisting of 4 large (HpdB) subunits and 4 small (HpdC) subunits, arranged as a tetramer of heterodimers. It depends on [4Fe-4S] cluster as a cofactor.

The enzyme catalyses 4-hydroxyphenylacetate + H(+) = 4-methylphenol + CO2. It carries out the reaction 3,4-dihydroxyphenylacetate + H(+) = 4-methylcatechol + CO2. Its function is as follows. Component of the HPA decarboxylase that decarboxylates phenylacetates with a hydroxyl group in the p-position. Active toward 4-hydroxyphenylacetate and 3,4-dihydroxyphenylacetate, forming 4-methylphenol and 4-methylcatechol, respectively. Is likely involved in the catabolism of aromatic amino acids such as tyrosine fermentation. 4-methylphenol (p-cresol) formation provides metabolic toxicity, which allows an active suppression of other microbes and may provide growth advantages for the producers in highly competitive environments. The small subunit is essential for enzymatic activity of HPA decarboxylase, and also seems to be involved in the regulation of the enzyme oligomeric state and catalytic activity. The polypeptide is 4-hydroxyphenylacetate decarboxylase small subunit (Clostridioides difficile (strain CD196) (Peptoclostridium difficile)).